The sequence spans 722 residues: ORC ubiquitin ligase 1 (722 aa).

Residues 18-56 (CHICLGKVRQPVVCTNNHVFCSICIDLWLKNNSQCPACR) form an RING-type; degenerate zinc finger. 2 coiled-coil regions span residues 87 to 129 (LRKT…TILD) and 157 to 267 (VVEW…KEDV). Ser210 is subject to Phosphoserine. The interval 273-359 (RAPSADSKGP…RLGARETPMD (87 aa)) is disordered. Low complexity predominate over residues 302–319 (AGSASASHLASPSSSRLA). Over residues 323-338 (SVRQESTSRTEPNCPQ) the composition is skewed to polar residues. A compositionally biased stretch (basic and acidic residues) spans 339 to 359 (NKDRYPKPTEPRLGARETPMD). A phosphoserine mark is found at Ser522, Ser549, Ser557, Ser564, and Ser566. The segment covering 541-555 (MSESDNSKSPCNNGF) has biased composition (polar residues). Disordered regions lie at residues 541 to 585 (MSES…GSKL) and 691 to 722 (VPEKRSKNGNQSTKRKIQSSLANASPSKATKS). Over residues 571–581 (EFLEEPDKLQE) the composition is skewed to basic and acidic residues. Polar residues predominate over residues 698–722 (NGNQSTKRKIQSSLANASPSKATKS). 2 positions are modified to phosphoserine: Ser715 and Ser717.

As to quaternary structure, associates with ORC complex. Binds to chromatin; association is cell cycle-regulated, absent from mitotic chromosomes, is associated with chromatin from G1 and partially released from chromatin from mid S-phase. Post-translationally, auto-ubiquitinated.

It localises to the chromosome. It carries out the reaction S-ubiquitinyl-[E2 ubiquitin-conjugating enzyme]-L-cysteine + [acceptor protein]-L-lysine = [E2 ubiquitin-conjugating enzyme]-L-cysteine + N(6)-ubiquitinyl-[acceptor protein]-L-lysine.. E3 ubiquitin ligase essential for DNA replication origin activation during S phase. Acts as a replication origin selector which selects the origins to be fired and catalyzes the multi-mono-ubiquitination of a subset of chromatin-bound ORC3 and ORC5 during S-phase. In Mus musculus (Mouse), this protein is ORC ubiquitin ligase 1.